Reading from the N-terminus, the 227-residue chain is Protein CAP22 (227 aa).

N-linked (GlcNAc...) asparagine glycans are attached at residues Asn-55 and Asn-72. A disordered region spans residues 143 to 162; it reads TTIGGGATPAPTSERSRTSD.

The protein resides in the secreted. Its subcellular location is the cell wall. The sequence is that of Protein CAP22 (CAP22) from Colletotrichum gloeosporioides (Anthracnose fungus).